Here is a 1075-residue protein sequence, read N- to C-terminus: Protein nervous wreck (1075 aa).

An F-BAR domain is found at 11 to 289; it reads VKFLKNLHTE…QAQQLTREYN (279 aa). Disordered regions lie at residues 361–381 and 431–536; these read LRDSGQRTDPNDPNGPDLDTK and SASS…DEPI. A compositionally biased stretch (polar residues) spans 431-453; that stretch reads SASSISMRTDASGQGENPSSDSF. Positions 469–482 are enriched in basic and acidic residues; sequence PKQEQQLSRDRTFS. Residues 493–512 show a composition bias toward low complexity; the sequence is SAAAASSAAAASSSMMASSA. SH3 domains lie at 542–603 and 658–721; these read EAIF…IDQE and SDVE…ECDE. Disordered stretches follow at residues 722-747, 769-837, and 864-917; these read MGEPLSEGGDESPPPTAAPTFALPPA, SQDT…EKGA, and GADK…EGNA. 2 stretches are compositionally biased toward pro residues: residues 733–747 and 809–818; these read SPPPTAAPTFALPPA and QPPPSLPPPQ. Positions 819–837 are enriched in low complexity; the sequence is LAKAGGSAPGSGSKVEKGA. Residues 883–897 are compositionally biased toward basic and acidic residues; the sequence is VSKEQPAEVAKKPDI.

As to quaternary structure, homodimer. Interacts (via SH3 domain 1) with WASp. Interacts (via SH3 domain 1) with shi/dynamin. Interacts (via SH3 domain 2) with Dap160. Interacts (via F-BAR domain) with SH3PX1. Interacts (via SH3 domain 2) with Snx16. Identified in a complex with Syn and Syt1. As to expression, detected in larval body wall muscle. Detected at the neuromuscular junction, on motoneuron axons and axon terminals, at synaptic boutons in the periactive zone surrounding the synapse (at protein level). Detected on motoneuron axons and axon terminals, at synaptic boutons in the periactive zone surrounding the synapse.

It is found in the endomembrane system. The protein localises to the synapse. It localises to the cell projection. The protein resides in the axon. Its subcellular location is the presynaptic cell membrane. It is found in the cytoplasmic vesicle. The protein localises to the secretory vesicle. It localises to the synaptic vesicle. The protein resides in the recycling endosome. Adapter protein that provides a link between vesicular membrane traffic and the actin assembly machinery. Acts together with Cdc42 to stimulate actin nucleation mediated by WASp and the ARP2/3 complex. Binds to membranes enriched in phosphatidylinositol 4,5-bisphosphate and causes local membrane deformation. Required for normal structure and function of synapses at the neuromuscular junction. Plays a role in synaptic vesicle trafficking. Required for the release of a normal number of synaptic vesicles per action potential. The chain is Protein nervous wreck from Drosophila melanogaster (Fruit fly).